Reading from the N-terminus, the 322-residue chain is Undecaprenyl-phosphate 4-deoxy-4-formamido-L-arabinose transferase (322 aa).

The Cytoplasmic portion of the chain corresponds to methionine 1 to methionine 235. The chain crosses the membrane as a helical span at residues leucine 236–isoleucine 256. Residues leucine 257–glycine 269 are Periplasmic-facing. The chain crosses the membrane as a helical span at residues valine 270 to leucine 290. The Cytoplasmic portion of the chain corresponds to leucine 291 to glutamate 322.

Belongs to the glycosyltransferase 2 family.

Its subcellular location is the cell inner membrane. The catalysed reaction is UDP-4-deoxy-4-formamido-beta-L-arabinose + di-trans,octa-cis-undecaprenyl phosphate = 4-deoxy-4-formamido-alpha-L-arabinopyranosyl di-trans,octa-cis-undecaprenyl phosphate + UDP. It participates in glycolipid biosynthesis; 4-amino-4-deoxy-alpha-L-arabinose undecaprenyl phosphate biosynthesis; 4-amino-4-deoxy-alpha-L-arabinose undecaprenyl phosphate from UDP-4-deoxy-4-formamido-beta-L-arabinose and undecaprenyl phosphate: step 1/2. Its pathway is bacterial outer membrane biogenesis; lipopolysaccharide biosynthesis. Its function is as follows. Catalyzes the transfer of 4-deoxy-4-formamido-L-arabinose from UDP to undecaprenyl phosphate. The modified arabinose is attached to lipid A and is required for resistance to polymyxin and cationic antimicrobial peptides. The chain is Undecaprenyl-phosphate 4-deoxy-4-formamido-L-arabinose transferase from Shigella flexneri.